The primary structure comprises 302 residues: Glycine--tRNA ligase alpha subunit (302 aa).

It belongs to the class-II aminoacyl-tRNA synthetase family. In terms of assembly, tetramer of two alpha and two beta subunits.

The protein localises to the cytoplasm. The catalysed reaction is tRNA(Gly) + glycine + ATP = glycyl-tRNA(Gly) + AMP + diphosphate. This Haemophilus influenzae (strain PittGG) protein is Glycine--tRNA ligase alpha subunit.